The primary structure comprises 716 residues: Amino-acid acetyltransferase, mitochondrial (716 aa).

The N-terminal 44 residues, 1-44, are a transit peptide targeting the mitochondrion; the sequence is MSPHTGWPRTVNSSLLKKHRSSLCTCQHTSSFLPRSFSTTADRH. Disordered regions lie at residues 99–119 and 487–508; these read YPKS…APTL and LSSS…TVYP. Residues 102-112 are compositionally biased toward basic and acidic residues; that stretch reads SPDENKPEPEK. Over residues 497–508 the composition is skewed to polar residues; it reads GPTNNGQGTVYP. The N-acetyltransferase domain occupies 537 to 706; it reads SRPRLKLDDP…YEAVCRSTQP (170 aa).

This sequence belongs to the acetyltransferase family.

It is found in the mitochondrion. It catalyses the reaction L-glutamate + acetyl-CoA = N-acetyl-L-glutamate + CoA + H(+). It participates in amino-acid biosynthesis; L-arginine biosynthesis; N(2)-acetyl-L-ornithine from L-glutamate: step 1/4. N-acetylglutamate synthase involved in arginine biosynthesis. This Neosartorya fischeri (strain ATCC 1020 / DSM 3700 / CBS 544.65 / FGSC A1164 / JCM 1740 / NRRL 181 / WB 181) (Aspergillus fischerianus) protein is Amino-acid acetyltransferase, mitochondrial (arg2).